Reading from the N-terminus, the 614-residue chain is Polyamine transporter 2 (614 aa).

Residues 1-40 form a disordered region; the sequence is MSDQESVVSFNSQNTSMVDVEGQQPQQYVPSKTNSRANQL. Topologically, residues 1–173 are cytoplasmic; the sequence is MSDQESVVSF…WPSWVRWSYT (173 aa). Residue serine 50 is modified to Phosphoserine. Polar residues predominate over residues 99 to 122; sequence RTASALSRTRTKQLNRTATNSSST. Positions 99–144 are disordered; that stretch reads RTASALSRTRTKQLNRTATNSSSTGKEEMEEEETEEREDQSGENEL. Acidic residues predominate over residues 126–144; sequence EMEEEETEEREDQSGENEL. A helical membrane pass occupies residues 174–194; sequence VLLSILVICVAYGSACISGGL. Over 195-206 the chain is Extracellular; sequence GTVEKKYHVGME. A helical membrane pass occupies residues 207–227; it reads AAILSCSLMVIGFSLGPLIWS. The Cytoplasmic segment spans residues 228–236; sequence PVSDLYGRR. Residues 237-257 form a helical membrane-spanning segment; sequence VAYFVSMGLYVIFNIPCALAP. The Extracellular segment spans residues 258–266; that stretch reads NLGCLLACR. A helical transmembrane segment spans residues 267 to 287; it reads FLCGVWSSSGLCLVGGSIADM. Residues 288–297 are Cytoplasmic-facing; sequence FPSETRGKAI. The helical transmembrane segment at 298–318 threads the bilayer; sequence AFFAFAPYVGPVVGPLVNGFI. Over 319 to 326 the chain is Extracellular; sequence SVSTGRMD. The chain crosses the membrane as a helical span at residues 327–347; it reads LIFWVNMAFAGVMWIISSAIP. Over 348 to 407 the chain is Cytoplasmic; that stretch reads ETYAPVILKRKAARLRKETGNPKIMTEQEAQGVSMSEMMRACLLRPLYFAVTEPVLVATC. Residues 408 to 428 traverse the membrane as a helical segment; it reads FYVCLIYSLLYAFFFAFPVIF. At 429 to 437 the chain is on the extracellular side; the sequence is GELYGYKDN. The helical transmembrane segment at 438-458 threads the bilayer; it reads LVGLMFIPIVIGALWALATTF. At 459 to 478 the chain is on the cytoplasmic side; that stretch reads YCENKYLQIVKQRKPTPEDR. Residues 479–499 form a helical membrane-spanning segment; sequence LLGAKIGAPFAAIALWILGAT. At 500–503 the chain is on the extracellular side; that stretch reads AYKH. Residues 504-524 traverse the membrane as a helical segment; the sequence is IIWVGPASAGLAFGFGMVLIY. Residues 525–541 are Cytoplasmic-facing; it reads YSLNNYIIDCYVQYASS. A helical transmembrane segment spans residues 542-562; the sequence is ALATKVFLRSAGGAAFPLFTI. Residues 563 to 574 are Extracellular-facing; sequence QMYHKLNLHWGS. Residues 575-595 form a helical membrane-spanning segment; that stretch reads WLLAFISTAMIALPFAFSYWG. Topologically, residues 596–614 are cytoplasmic; that stretch reads KGLRHKLSKKDYSIDSVEM.

The protein belongs to the major facilitator superfamily. DHA1 family. Polyamines/proton antiporter (TC 2.A.1.2.16) subfamily.

Its subcellular location is the cell membrane. Functionally, cell membrane polyamine/proton antiporter, involved in the detoxification of excess polyamines in the cytoplasm. Recognizes spermine, but not spermidine. This chain is Polyamine transporter 2 (TPO2), found in Saccharomyces cerevisiae (strain ATCC 204508 / S288c) (Baker's yeast).